A 217-amino-acid polypeptide reads, in one-letter code: Pyrophosphatase PpaX (217 aa).

Aspartate 11 (nucleophile) is an active-site residue.

It belongs to the HAD-like hydrolase superfamily. PpaX family. It depends on Mg(2+) as a cofactor.

The enzyme catalyses diphosphate + H2O = 2 phosphate + H(+). Its function is as follows. Hydrolyzes pyrophosphate formed during P-Ser-HPr dephosphorylation by HPrK/P. Might play a role in controlling the intracellular pyrophosphate pool. The protein is Pyrophosphatase PpaX of Listeria monocytogenes serotype 4a (strain HCC23).